Consider the following 1234-residue polypeptide: ATP-dependent helicase/nuclease subunit A (1234 aa).

The UvrD-like helicase ATP-binding domain maps to 9-482 (STWTDDQWEA…IDLNKNFRSR (474 aa)). 30–37 (AAAGSGKT) contacts ATP. The UvrD-like helicase C-terminal domain maps to 509–800 (QAELKLGASY…RMMTIHSSKG (292 aa)).

The protein belongs to the helicase family. AddA subfamily. In terms of assembly, heterodimer of AddA and AddB/RexB. Requires Mg(2+) as cofactor.

It catalyses the reaction Couples ATP hydrolysis with the unwinding of duplex DNA by translocating in the 3'-5' direction.. It carries out the reaction ATP + H2O = ADP + phosphate + H(+). Functionally, the heterodimer acts as both an ATP-dependent DNA helicase and an ATP-dependent, dual-direction single-stranded exonuclease. Recognizes the chi site generating a DNA molecule suitable for the initiation of homologous recombination. The AddA nuclease domain is required for chi fragment generation; this subunit has the helicase and 3' -&gt; 5' nuclease activities. In Bacillus pumilus (strain SAFR-032), this protein is ATP-dependent helicase/nuclease subunit A.